The primary structure comprises 177 residues: MDTPDSASRVFCGRFLSMVNTDDVNAIILAQKNMLDRFEKTNEMLLNFNNLSSVRLQQMSERFMHHTRTLVDMKRDLDSIFRRIRTLKGKLARQHPEAFSHIPEGSFLEDEDEDPIPPSITTTIATSEQSTGSCDTSPDTVSPSLSPGFEDLSHIQPGSPAINGHRQTDDEEETHEE.

M1 is subject to N-acetylmethionine. The tract at residues 100–177 (SHIPEGSFLE…TDDEEETHEE (78 aa)) is disordered. Positions 125–145 (ATSEQSTGSCDTSPDTVSPSL) are enriched in polar residues.

This sequence belongs to the KXD1 family. Component of the BLOC-one-related complex (BORC) which is composed of BLOC1S1, BLOC1S2, BORCS5, BORCS6, BORCS7, BORCS8, KXD1 and SNAPIN. Associates with the BLOC-1 complex. Interacts with BLOC1S1. Interacts with DTNBP1/BLOC1S7 (via coiled-coil domain). In terms of tissue distribution, widely expressed.

The protein resides in the lysosome membrane. In terms of biological role, as part of the BORC complex may play a role in lysosomes movement and localization at the cell periphery. Associated with the cytosolic face of lysosomes, the BORC complex may recruit ARL8B and couple lysosomes to microtubule plus-end-directed kinesin motor. May also be involved in the biogenesis of lysosome-related organelles such as melanosomes. The chain is KxDL motif-containing protein 1 (Kxd1) from Mus musculus (Mouse).